Consider the following 778-residue polypeptide: Acyl-homoserine lactone acylase PvdQ (778 aa).

The N-terminal stretch at 1-25 (MTISRQFTGLTLAGLFLGLSLSAQA) is a signal peptide. Positions 196-218 (IENNARAYQLADTRLQRFALDRG) are cleaved as a propeptide — spacer peptide. Ser219 (nucleophile) is an active-site residue.

This sequence belongs to the peptidase S45 family. Heterodimer of an alpha subunit and a beta subunit processed from the same precursor.

The protein resides in the periplasm. It catalyses the reaction an N-acyl-L-homoserine lactone + H2O = L-homoserine lactone + a carboxylate. Catalyzes the deacylation of acyl-homoserine lactone (AHL or acyl-HSL), releasing homoserine lactone (HSL) and the corresponding fatty acid. Possesses a specificity for the degradation of long-chain acyl-HSLs (side chains of 11 to 14 carbons in length). The protein is Acyl-homoserine lactone acylase PvdQ (pvdQ) of Pseudomonas fluorescens (strain Pf0-1).